A 140-amino-acid polypeptide reads, in one-letter code: ATP synthase epsilon chain (140 aa).

It belongs to the ATPase epsilon chain family. As to quaternary structure, F-type ATPases have 2 components, CF(1) - the catalytic core - and CF(0) - the membrane proton channel. CF(1) has five subunits: alpha(3), beta(3), gamma(1), delta(1), epsilon(1). CF(0) has three main subunits: a, b and c.

The protein localises to the cell inner membrane. In terms of biological role, produces ATP from ADP in the presence of a proton gradient across the membrane. The sequence is that of ATP synthase epsilon chain from Xanthomonas axonopodis pv. citri (strain 306).